The sequence spans 256 residues: 4-oxalocrotonate decarboxylase (256 aa).

This sequence belongs to the hydratase/decarboxylase family. Forms a complex with AmnF. Requires Mg(2+) as cofactor. The cofactor is Mn(2+).

The enzyme catalyses (3E)-2-oxohex-3-enedioate + H(+) = 2-oxopent-4-enoate + CO2. With respect to regulation, strongly inhibited by Fe(2+), Fe(3+), K(3)[Fe(CN)(6)], Ag(+) and Cu(2+). In terms of biological role, involved in the modified meta-cleavage pathway for the 2-aminophenol catabolism. The protein is 4-oxalocrotonate decarboxylase (amnE) of Pseudomonas sp.